Consider the following 170-residue polypeptide: MKQTERRILLGRVVGAFGVKGELKLESWTEPRSAIFRYQPWIVRAPSGQESVINGVRGRDQGKNLIAVFPGVADRDTVEAMHGTEIYVARSALPPPKPDEYYWVDLEELQVETVEGVKLGTVSHLFSTGSNDVVVVRGDRERMIPFVFPDFVKSVDFEANLIVVDWDPDF.

One can recognise a PRC barrel domain in the interval 98 to 170 (PDEYYWVDLE…LIVVDWDPDF (73 aa)).

It belongs to the RimM family. Binds ribosomal protein uS19.

The protein localises to the cytoplasm. Functionally, an accessory protein needed during the final step in the assembly of 30S ribosomal subunit, possibly for assembly of the head region. Essential for efficient processing of 16S rRNA. May be needed both before and after RbfA during the maturation of 16S rRNA. It has affinity for free ribosomal 30S subunits but not for 70S ribosomes. This is Ribosome maturation factor RimM from Xanthomonas oryzae pv. oryzae (strain MAFF 311018).